We begin with the raw amino-acid sequence, 522 residues long: Mediator of RNA polymerase II transcription subunit 1.2 (522 aa).

Positions 13-40 form a coiled coil; the sequence is LLEQRKNQELNIEHIDEEMRLEQVRQAA.

The protein belongs to the Mediator complex subunit 1 family. Component of the Mediator complex.

The protein resides in the nucleus. Functionally, component of the Mediator complex, a coactivator involved in the regulated transcription of nearly all RNA polymerase II-dependent genes. Mediator functions as a bridge to convey information from gene-specific regulatory proteins to the basal RNA polymerase II transcription machinery. Mediator is recruited to promoters by direct interactions with regulatory proteins and serves as a scaffold for the assembly of a functional preinitiation complex with RNA polymerase II and the general transcription factors. The chain is Mediator of RNA polymerase II transcription subunit 1.2 (mdt-1.2) from Caenorhabditis elegans.